The following is a 141-amino-acid chain: 3-hydroxyacyl-[acyl-carrier-protein] dehydratase FabZ (141 aa).

The active site involves H48.

It belongs to the thioester dehydratase family. FabZ subfamily.

It is found in the cytoplasm. The enzyme catalyses a (3R)-hydroxyacyl-[ACP] = a (2E)-enoyl-[ACP] + H2O. Involved in unsaturated fatty acids biosynthesis. Catalyzes the dehydration of short chain beta-hydroxyacyl-ACPs and long chain saturated and unsaturated beta-hydroxyacyl-ACPs. This Bacillus velezensis (strain DSM 23117 / BGSC 10A6 / LMG 26770 / FZB42) (Bacillus amyloliquefaciens subsp. plantarum) protein is 3-hydroxyacyl-[acyl-carrier-protein] dehydratase FabZ.